The sequence spans 296 residues: MEYNDIATPTRTKQLLDQYGFKFKKSLGQNFLVDTNVIRNIIEAAGIDKTSGVIEIGPGMGSLTEQLAKHAKQVLAFEIDQRLIPILGETLSPYDNVTVINEDILKADVASAIETYLHHCDEIFVVANLPYYITTPILMGLLEKNLNINSYVVMMQKEVGERLSAIPSTKAYGSLSIAVQYYTDVKRIMVVPKGVFMPPPNVDSLVVKLTTLERPRVDVEDENLFFKLTRGAFVQRRKTILNNYMSLIQDSKEHKSRIIEWLEASGVAPSRRGESLNLNDYAQLSNNMKKYPELVI.

Asparagine 30, leucine 32, glycine 57, glutamate 78, aspartate 103, and asparagine 128 together coordinate S-adenosyl-L-methionine.

This sequence belongs to the class I-like SAM-binding methyltransferase superfamily. rRNA adenine N(6)-methyltransferase family. RsmA subfamily.

Its subcellular location is the cytoplasm. It carries out the reaction adenosine(1518)/adenosine(1519) in 16S rRNA + 4 S-adenosyl-L-methionine = N(6)-dimethyladenosine(1518)/N(6)-dimethyladenosine(1519) in 16S rRNA + 4 S-adenosyl-L-homocysteine + 4 H(+). Specifically dimethylates two adjacent adenosines (A1518 and A1519) in the loop of a conserved hairpin near the 3'-end of 16S rRNA in the 30S particle. May play a critical role in biogenesis of 30S subunits. This Macrococcus caseolyticus (strain JCSC5402) (Macrococcoides caseolyticum) protein is Ribosomal RNA small subunit methyltransferase A.